A 267-amino-acid polypeptide reads, in one-letter code: Undecaprenyl-diphosphatase (267 aa).

Helical transmembrane passes span 1–21 (MTLFHLILVAVIQGLTEFLPV), 49–69 (VGTLFAVVLYFRADVAVAVAG), 83–103 (AFLALCLLIATVPVMVVGLAL), 111–131 (ALRSMAVIGWTMLIFGIVLYW), 190–210 (MLMSIPTILASGGLLGVEVAA), 219–239 (DAAIGAVFAFGAALLALTLMM), and 245–265 (VSFTPYVIYRVCLGTILLIIA).

Belongs to the UppP family.

The protein resides in the cell inner membrane. It catalyses the reaction di-trans,octa-cis-undecaprenyl diphosphate + H2O = di-trans,octa-cis-undecaprenyl phosphate + phosphate + H(+). In terms of biological role, catalyzes the dephosphorylation of undecaprenyl diphosphate (UPP). Confers resistance to bacitracin. This is Undecaprenyl-diphosphatase from Dinoroseobacter shibae (strain DSM 16493 / NCIMB 14021 / DFL 12).